Here is a 230-residue protein sequence, read N- to C-terminus: Demethylmenaquinone methyltransferase (230 aa).

S-adenosyl-L-methionine is bound by residues Thr-57, Asp-77, and 101 to 102 (DI).

Belongs to the class I-like SAM-binding methyltransferase superfamily. MenG/UbiE family.

It carries out the reaction a 2-demethylmenaquinol + S-adenosyl-L-methionine = a menaquinol + S-adenosyl-L-homocysteine + H(+). The protein operates within quinol/quinone metabolism; menaquinone biosynthesis; menaquinol from 1,4-dihydroxy-2-naphthoate: step 2/2. Functionally, methyltransferase required for the conversion of demethylmenaquinol (DMKH2) to menaquinol (MKH2). The sequence is that of Demethylmenaquinone methyltransferase from Chlamydia pneumoniae (Chlamydophila pneumoniae).